The primary structure comprises 501 residues: U6 snRNA (guanine-N(2))-methyltransferase THUMPD2 (501 aa).

Residues 149–264 (TEQIQELQET…DVYSVLGIPV (116 aa)) form the THUMP domain. The interval 414–469 (LKGGEASSGPLNSQGGHTEEPGGEERLTPAEKAAVSEPVSSPFAASNQGRLDRMPP) is disordered. A compositionally biased stretch (basic and acidic residues) spans 430 to 442 (HTEEPGGEERLTP).

It belongs to the methyltransferase superfamily. Part of the heterodimeric THUMPD2-TRM112 methyltransferase complex; this complex forms an active tRNA methyltransferase, where TRMT112 acts as an activator of the catalytic subunit THUMPD2.

It localises to the nucleus. The enzyme catalyses guanosine in U6 snRNA + S-adenosyl-L-methionine = N(2)-methylguanosine in U6 snRNA + S-adenosyl-L-homocysteine + H(+). In terms of biological role, catalytic subunit of the THUMPD2-TRM112 methyltransferase complex, that specifically mediates the S-adenosyl-L-methionine-dependent N(2)-methylation of guanosine nucleotides, most probably at position 72 (m2G72), in the U6snRNA of the major spliceosome. This modification in the U6 snRNA affects the constitutive splicing efficiency of introns that have suboptimal splice sites and can impact final mRNA levels. This Bos taurus (Bovine) protein is U6 snRNA (guanine-N(2))-methyltransferase THUMPD2.